The following is a 642-amino-acid chain: Probable serine/threonine-protein kinase drkA (642 aa).

The signal sequence occupies residues 1–23 (MKKLPFLIIIIYIFLILISISSS). The Extracellular portion of the chain corresponds to 24-322 (IDYNYNNDID…KPTISLLKKY (299 aa)). Positions 106 to 128 (SENSGSGSNSNSNSKNTDSSTGP) are enriched in low complexity. Positions 106–136 (SENSGSGSNSNSNSKNTDSSTGPTPSPISIN) are disordered. Residues asparagine 136, asparagine 140, asparagine 158, asparagine 244, and asparagine 271 are each glycosylated (N-linked (GlcNAc...) asparagine). Residues 323–343 (LIIGFSIVGGLLIIGGCFLLI) form a helical membrane-spanning segment. Topologically, residues 344–642 (RNRYRSSGYY…SDLQYVRQQL (299 aa)) are cytoplasmic. Residues 374-627 (IKIGVRIGKG…EQCLERLESI (254 aa)) form the Protein kinase domain. ATP is bound by residues 380 to 388 (IGKGNYGEV) and lysine 401. Catalysis depends on aspartate 497, which acts as the Proton acceptor.

Belongs to the protein kinase superfamily. TKL Ser/Thr protein kinase family.

It is found in the membrane. It carries out the reaction L-seryl-[protein] + ATP = O-phospho-L-seryl-[protein] + ADP + H(+). It catalyses the reaction L-threonyl-[protein] + ATP = O-phospho-L-threonyl-[protein] + ADP + H(+). The chain is Probable serine/threonine-protein kinase drkA (drkA) from Dictyostelium discoideum (Social amoeba).